A 338-amino-acid polypeptide reads, in one-letter code: Ketol-acid reductoisomerase (NADP(+)) (338 aa).

The region spanning 1–181 is the KARI N-terminal Rossmann domain; the sequence is MKVFYDKDCD…GGGRTGIIET (181 aa). NADP(+) is bound by residues 24-27, arginine 47, serine 50, threonine 52, and 82-85; these read YGSQ and DEFQ. Histidine 107 is an active-site residue. Glycine 133 serves as a coordination point for NADP(+). A KARI C-terminal knotted domain is found at 182 to 327; sequence TFKDETETDL…EQLRSMMPWI (146 aa). 4 residues coordinate Mg(2+): aspartate 190, glutamate 194, glutamate 226, and glutamate 230. Residue serine 251 coordinates substrate.

This sequence belongs to the ketol-acid reductoisomerase family. It depends on Mg(2+) as a cofactor.

The enzyme catalyses (2R)-2,3-dihydroxy-3-methylbutanoate + NADP(+) = (2S)-2-acetolactate + NADPH + H(+). The catalysed reaction is (2R,3R)-2,3-dihydroxy-3-methylpentanoate + NADP(+) = (S)-2-ethyl-2-hydroxy-3-oxobutanoate + NADPH + H(+). Its pathway is amino-acid biosynthesis; L-isoleucine biosynthesis; L-isoleucine from 2-oxobutanoate: step 2/4. It functions in the pathway amino-acid biosynthesis; L-valine biosynthesis; L-valine from pyruvate: step 2/4. In terms of biological role, involved in the biosynthesis of branched-chain amino acids (BCAA). Catalyzes an alkyl-migration followed by a ketol-acid reduction of (S)-2-acetolactate (S2AL) to yield (R)-2,3-dihydroxy-isovalerate. In the isomerase reaction, S2AL is rearranged via a Mg-dependent methyl migration to produce 3-hydroxy-3-methyl-2-ketobutyrate (HMKB). In the reductase reaction, this 2-ketoacid undergoes a metal-dependent reduction by NADPH to yield (R)-2,3-dihydroxy-isovalerate. In Pseudomonas putida (strain W619), this protein is Ketol-acid reductoisomerase (NADP(+)).